The sequence spans 463 residues: Sporulation-specific protein 22 (463 aa).

A signal peptide spans 1–25 (MNRITRKSCLFAIIFASLFVTHALG). 5 LRR repeats span residues 127–147 (SPEL…LFQL), 185–206 (IEII…NFNK), 207–233 (VQEI…TIRG), 251–275 (LREV…KVKS), and 302–325 (INNV…LMIA). 3 N-linked (GlcNAc...) asparagine glycosylation sites follow: N256, N314, and N327. N440 is lipidated: GPI-anchor amidated asparagine. Positions 441 to 463 (SANPSMQLDPLLFGTCLVAMLLF) are cleaved as a propeptide — removed in mature form.

It belongs to the SPS2 family.

The protein localises to the cell membrane. Functionally, redundant with SPS2 for the organization of the beta-glucan layer of the spore wall. The polypeptide is Sporulation-specific protein 22 (SPS22) (Saccharomyces cerevisiae (strain ATCC 204508 / S288c) (Baker's yeast)).